The primary structure comprises 308 residues: Electron transfer flavoprotein subunit alpha (308 aa).

Residue 252-280 participates in FAD binding; it reads LYVAVGISGAIQHLAGMKDSKVIVAINKD.

This sequence belongs to the ETF alpha-subunit/FixB family. As to quaternary structure, heterodimer of an alpha and a beta subunit. FAD is required as a cofactor.

Its function is as follows. The electron transfer flavoprotein serves as a specific electron acceptor for other dehydrogenases. It transfers the electrons to the main respiratory chain via ETF-ubiquinone oxidoreductase (ETF dehydrogenase). The chain is Electron transfer flavoprotein subunit alpha (etfA) from Paracoccus denitrificans.